Here is a 2273-residue protein sequence, read N- to C-terminus: Acetyl-CoA carboxylase, mitochondrial (2273 aa).

The N-terminal 104 residues, 1–104 (KGKTITHGQS…RGNIHKHTRL (104 aa)), are a transit peptide targeting the mitochondrion. The Biotin carboxylation domain occupies 134 to 635 (VISKILIANN…STGWLDDLIL (502 aa)). An ATP-grasp domain is found at 292–484 (KTNFVSVPDD…LPATQLQIAM (193 aa)). 332–337 (GGGGKG) contacts ATP. Residue Arg-459 is part of the active site. Positions 763-837 (LEAELNPTQV…EAGDVIAKLT (75 aa)) constitute a Biotinyl-binding domain. Position 804 is an N6-biotinyllysine (Lys-804). The CoA carboxyltransferase N-terminal domain maps to 1532 to 1867 (PYSVKDWLQP…KRDMSPPLLE (336 aa)). Residues 1532–2187 (PYSVKDWLQP…EGQVIKRLQK (656 aa)) are carboxyltransferase. The CoA site is built by Arg-1776, Lys-2080, and Arg-2082. Positions 1871-2187 (RWDRDVDFKP…EGQVIKRLQK (317 aa)) constitute a CoA carboxyltransferase C-terminal domain.

Biotin serves as cofactor.

It localises to the mitochondrion. It catalyses the reaction hydrogencarbonate + acetyl-CoA + ATP = malonyl-CoA + ADP + phosphate + H(+). The enzyme catalyses N(6)-biotinyl-L-lysyl-[protein] + hydrogencarbonate + ATP = N(6)-carboxybiotinyl-L-lysyl-[protein] + ADP + phosphate + H(+). It participates in lipid metabolism; malonyl-CoA biosynthesis; malonyl-CoA from acetyl-CoA: step 1/1. Catalyzes the rate-limiting reaction in the mitochondrial fatty acid synthesis (FAS) type II pathway. Responsible for the production of the mitochondrial malonyl-CoA, used for the biosynthesis of the cofactor lipoic acid. This protein carries three functions: biotin carboxyl carrier protein, biotin carboxylase, and carboxyltransferase. This is Acetyl-CoA carboxylase, mitochondrial (HFA1) from Saccharomyces cerevisiae (strain YJM789) (Baker's yeast).